The primary structure comprises 431 residues: Inactive polypeptide N-acetylgalactosaminyltransferase-like protein 5 (431 aa).

The Cytoplasmic portion of the chain corresponds to 1–4 (MKSV). A helical; Signal-anchor for type II membrane protein transmembrane segment spans residues 5-27 (IIQGLFCGFLAIGLWASMLLLFL). The Lumenal segment spans residues 28–431 (HLEQEDMLEN…TERKRKKNRF (404 aa)). Residue N68 is glycosylated (N-linked (GlcNAc...) asparagine). Cystine bridges form between C105-C336 and C327-C403. A catalytic subdomain A region spans residues 114–224 (LPTASIIICF…RVWLEPLLHA (111 aa)). Positions 282–344 (PIRSPAMTGG…PCSRVGYNSK (63 aa)) are catalytic subdomain B. 2 N-linked (GlcNAc...) asparagine glycosylation sites follow: N353 and N390.

The protein belongs to the glycosyltransferase 2 family. GalNAc-T subfamily. Mn(2+) serves as cofactor. Expressed in testis. Mainly expressed in the round and elongated spermatids during spermiogenesis, not in the outermost cells of the seminiferous tubules, which contain spermatogonia and somatic Sertoli cells. Present in the juxtanuclear space in the round spermatids, not in the acrosomal vesicles. In the elongating spermatids, localizes strongly in the acroplaxome, the region between the developing acrosome and nucleus. During differentiation, also weakly detected in the transient manchette containing microtubules. In epididymal spermatozoa, weakly detected in the midpiece, but concentrates mainly in the neck region around the head-tail coupling apparatus (at protein level).

The protein localises to the late endosome membrane. In terms of biological role, probable inactive glycosyltransferase required during spermatid development. May participate in protein loading into the acrosomes and accumulation of ubiquitin-proteasome systems around the head-tail coupling apparatus region. This is Inactive polypeptide N-acetylgalactosaminyltransferase-like protein 5 (Galntl5) from Mus musculus (Mouse).